A 210-amino-acid chain; its full sequence is Cell division protein SepF (210 aa).

Residues 13–101 are disordered; that stretch reads GLADGDEYDE…EPVDPGYRAP (89 aa). 2 stretches are compositionally biased toward basic and acidic residues: residues 22 to 70 and 83 to 93; these read EQPR…ERPE and VEPRRPARPEP.

Belongs to the SepF family. In terms of assembly, homodimer. Interacts with FtsZ.

It localises to the cytoplasm. Its function is as follows. Cell division protein that is part of the divisome complex and is recruited early to the Z-ring. Probably stimulates Z-ring formation, perhaps through the cross-linking of FtsZ protofilaments. Its function overlaps with FtsA. This is Cell division protein SepF from Micrococcus luteus (strain ATCC 4698 / DSM 20030 / JCM 1464 / CCM 169 / CCUG 5858 / IAM 1056 / NBRC 3333 / NCIMB 9278 / NCTC 2665 / VKM Ac-2230) (Micrococcus lysodeikticus).